A 623-amino-acid chain; its full sequence is Chaperone protein HtpG (623 aa).

The a; substrate-binding stretch occupies residues 1–336 (MVSKQQTMGF…ASDLPLNISR (336 aa)). Positions 337–550 (EILQDNKQVE…EQDMGLEMQR (214 aa)) are b. Positions 551–623 (ILQAAGQQIP…NRVNRLLVSS (73 aa)) are c.

This sequence belongs to the heat shock protein 90 family. In terms of assembly, homodimer.

It is found in the cytoplasm. Molecular chaperone. Has ATPase activity. The sequence is that of Chaperone protein HtpG from Legionella pneumophila (strain Lens).